Consider the following 338-residue polypeptide: Glycerol-3-phosphate dehydrogenase [NAD(P)+] (338 aa).

NADPH-binding residues include tryptophan 12, histidine 33, and lysine 110. 3 residues coordinate sn-glycerol 3-phosphate: lysine 110, glycine 142, and serine 144. Residue alanine 146 coordinates NADPH. Residues lysine 197, aspartate 250, serine 260, arginine 261, and asparagine 262 each coordinate sn-glycerol 3-phosphate. The active-site Proton acceptor is lysine 197. An NADPH-binding site is contributed by arginine 261. Residues valine 286 and glutamate 288 each contribute to the NADPH site.

This sequence belongs to the NAD-dependent glycerol-3-phosphate dehydrogenase family.

It localises to the cytoplasm. It catalyses the reaction sn-glycerol 3-phosphate + NAD(+) = dihydroxyacetone phosphate + NADH + H(+). It carries out the reaction sn-glycerol 3-phosphate + NADP(+) = dihydroxyacetone phosphate + NADPH + H(+). Its pathway is membrane lipid metabolism; glycerophospholipid metabolism. Functionally, catalyzes the reduction of the glycolytic intermediate dihydroxyacetone phosphate (DHAP) to sn-glycerol 3-phosphate (G3P), the key precursor for phospholipid synthesis. The polypeptide is Glycerol-3-phosphate dehydrogenase [NAD(P)+] (Acidobacterium capsulatum (strain ATCC 51196 / DSM 11244 / BCRC 80197 / JCM 7670 / NBRC 15755 / NCIMB 13165 / 161)).